The following is a 316-amino-acid chain: Lipoyl synthase (316 aa).

Basic and acidic residues predominate over residues 1–19 (MRDLKIPEQRHPEKAHRPD). The segment at 1–31 (MRDLKIPEQRHPEKAHRPDNAQPKKPSWIRV) is disordered. 7 residues coordinate [4Fe-4S] cluster: C55, C60, C66, C81, C85, C88, and S295. A Radical SAM core domain is found at 67–284 (WSQGHATMMI…EKAAYGKGFL (218 aa)).

The protein belongs to the radical SAM superfamily. Lipoyl synthase family. The cofactor is [4Fe-4S] cluster.

The protein localises to the cytoplasm. It catalyses the reaction [[Fe-S] cluster scaffold protein carrying a second [4Fe-4S](2+) cluster] + N(6)-octanoyl-L-lysyl-[protein] + 2 oxidized [2Fe-2S]-[ferredoxin] + 2 S-adenosyl-L-methionine + 4 H(+) = [[Fe-S] cluster scaffold protein] + N(6)-[(R)-dihydrolipoyl]-L-lysyl-[protein] + 4 Fe(3+) + 2 hydrogen sulfide + 2 5'-deoxyadenosine + 2 L-methionine + 2 reduced [2Fe-2S]-[ferredoxin]. It participates in protein modification; protein lipoylation via endogenous pathway; protein N(6)-(lipoyl)lysine from octanoyl-[acyl-carrier-protein]: step 2/2. Catalyzes the radical-mediated insertion of two sulfur atoms into the C-6 and C-8 positions of the octanoyl moiety bound to the lipoyl domains of lipoate-dependent enzymes, thereby converting the octanoylated domains into lipoylated derivatives. In Ruegeria sp. (strain TM1040) (Silicibacter sp.), this protein is Lipoyl synthase.